The chain runs to 634 residues: Chaperone protein HtpG (634 aa).

An a; substrate-binding region spans residues 1-342 (MSVETQKETL…SNDLSLNVSR (342 aa)). Residues 343–559 (EILQKDPVID…EQDLGLQMRQ (217 aa)) form a b region. Residues 560–634 (ILEASGQKVP…LNKLLVELSA (75 aa)) form a c region.

Belongs to the heat shock protein 90 family. Homodimer.

Its subcellular location is the cytoplasm. Molecular chaperone. Has ATPase activity. In Pseudomonas aeruginosa (strain ATCC 15692 / DSM 22644 / CIP 104116 / JCM 14847 / LMG 12228 / 1C / PRS 101 / PAO1), this protein is Chaperone protein HtpG.